Here is a 104-residue protein sequence, read N- to C-terminus: Ig kappa chain b5 variant C region (104 aa).

The Ig-like domain maps to 5–100 (PTVLIFPPSP…SGSPVVQSFS (96 aa)). Cysteine 26 and cysteine 85 are oxidised to a cystine.

The polypeptide is Ig kappa chain b5 variant C region (Oryctolagus cuniculus (Rabbit)).